A 613-amino-acid polypeptide reads, in one-letter code: Phostensin (613 aa).

A compositionally biased stretch (basic and acidic residues) spans 15–33 (RRQEEASVRGREKAERERL). 2 disordered regions span residues 15-231 (RRQE…SAYQ) and 266-505 (GEER…GKKR). Residues Ser54, Ser125, Ser133, Ser175, and Ser195 each carry the phosphoserine modification. Basic and acidic residues-rich tracts occupy residues 104–154 (RSEE…ERRL) and 167–191 (LEAR…EPWK). A Phosphothreonine modification is found at Thr199. Positions 199 to 221 (TPERSLRLAESREQSPRRKEVES) are enriched in basic and acidic residues. Position 224 is a phosphoserine (Ser224). The span at 266–282 (GEERQGYSEKCGRKEEW) shows a compositional bias: basic and acidic residues. Positions 301–310 (REAQGSSSTG) are enriched in polar residues. 3 stretches are compositionally biased toward basic and acidic residues: residues 314–327 (AEQR…RGMK), 340–350 (KAREWTPRDIE), and 357–367 (EPSESAEKRLE). Phosphoserine occurs at positions 368 and 432. A compositionally biased stretch (pro residues) spans 424–446 (QPPPPAPLSPPPPAPTAPQPPGD). The residue at position 457 (Lys457) is an N6-acetyllysine. A compositionally biased stretch (low complexity) spans 476–499 (PRRSVPPTTPATPTSPATADAAVP). Phosphoserine is present on residues Ser490 and Ser530. Residues 552–594 (QYPSESSVLEELGPEPEVPSAPNPPAAQPDDEEDEEELLLLQP) form a disordered region. Pro residues predominate over residues 567–578 (PEVPSAPNPPAA). Residues 580 to 589 (PDDEEDEEEL) show a composition bias toward acidic residues.

As to quaternary structure, interacts with Protein phosphatase 1 (PP1).

The protein resides in the cytoplasm. The protein localises to the cytoskeleton. Its function is as follows. May target protein phosphatase 1 to F-actin cytoskeleton. The protein is Phostensin (PPP1R18) of Macaca mulatta (Rhesus macaque).